Here is a 101-residue protein sequence, read N- to C-terminus: Urease subunit beta (101 aa).

It belongs to the urease beta subunit family. In terms of assembly, heterotrimer of UreA (gamma), UreB (beta) and UreC (alpha) subunits. Three heterotrimers associate to form the active enzyme.

The protein resides in the cytoplasm. The enzyme catalyses urea + 2 H2O + H(+) = hydrogencarbonate + 2 NH4(+). Its pathway is nitrogen metabolism; urea degradation; CO(2) and NH(3) from urea (urease route): step 1/1. The sequence is that of Urease subunit beta from Polaromonas naphthalenivorans (strain CJ2).